Here is a 495-residue protein sequence, read N- to C-terminus: AAA-ATPase At2g18193 (495 aa).

The chain crosses the membrane as a helical span at residues 7–28 (FSFSPSSLFSAYASLTGFLMLF). Residue 250–257 (GPPGTGKS) coordinates ATP. The disordered stretch occupies residues 451-495 (EVSICKATDDDEKQNGSLGCVKKKKKGGKQKGKGKGKGKAKTYLI). Basic residues predominate over residues 471–495 (VKKKKKGGKQKGKGKGKGKAKTYLI).

Belongs to the AAA ATPase family. BCS1 subfamily. Mg(2+) serves as cofactor.

Its subcellular location is the membrane. It carries out the reaction ATP + H2O = ADP + phosphate + H(+). This is AAA-ATPase At2g18193 from Arabidopsis thaliana (Mouse-ear cress).